A 221-amino-acid chain; its full sequence is Small ribosomal subunit protein eS1 (221 aa).

Belongs to the eukaryotic ribosomal protein eS1 family.

The chain is Small ribosomal subunit protein eS1 from Pyrobaculum aerophilum (strain ATCC 51768 / DSM 7523 / JCM 9630 / CIP 104966 / NBRC 100827 / IM2).